The chain runs to 101 residues: Putative metal transport protein HQ_3622A (101 aa).

An N-terminal signal peptide occupies residues 1 to 32 (MKIISMSMDSWIQRAALMLLGLVIVAPFFGWT). A helical membrane pass occupies residues 75 to 95 (IGTLISAGVGTVLTLIVAFGA).

It is found in the cell membrane. Its function is as follows. May be involved in metal transport. In Haloquadratum walsbyi (strain DSM 16790 / HBSQ001), this protein is Putative metal transport protein HQ_3622A.